We begin with the raw amino-acid sequence, 809 residues long: Carbon monoxide dehydrogenase large chain (809 aa).

C388 is a binding site for Cu(+). Mo-molybdopterin cytosine dinucleotide is bound at residue E763.

As to quaternary structure, dimer of heterotrimers. Each heterotrimer consists of a large, a medium and a small subunit. It depends on Cu(+) as a cofactor. Mo-molybdopterin cytosine dinucleotide is required as a cofactor.

It catalyses the reaction CO + a quinone + H2O = a quinol + CO2. Its function is as follows. Catalyzes the oxidation of carbon monoxide to carbon dioxide. This chain is Carbon monoxide dehydrogenase large chain (coxL), found in Afipia carboxidovorans (strain ATCC 49405 / DSM 1227 / KCTC 32145 / OM5) (Oligotropha carboxidovorans).